Reading from the N-terminus, the 310-residue chain is Methionyl-tRNA formyltransferase (310 aa).

(6S)-5,6,7,8-tetrahydrofolate is bound at residue 110–113 (SLLP).

It belongs to the Fmt family.

It carries out the reaction L-methionyl-tRNA(fMet) + (6R)-10-formyltetrahydrofolate = N-formyl-L-methionyl-tRNA(fMet) + (6S)-5,6,7,8-tetrahydrofolate + H(+). Functionally, attaches a formyl group to the free amino group of methionyl-tRNA(fMet). The formyl group appears to play a dual role in the initiator identity of N-formylmethionyl-tRNA by promoting its recognition by IF2 and preventing the misappropriation of this tRNA by the elongation apparatus. The chain is Methionyl-tRNA formyltransferase from Clostridium acetobutylicum (strain ATCC 824 / DSM 792 / JCM 1419 / IAM 19013 / LMG 5710 / NBRC 13948 / NRRL B-527 / VKM B-1787 / 2291 / W).